Consider the following 655-residue polypeptide: Gastrulation defective protein 1 homolog (655 aa).

Disordered stretches follow at residues 1–54 (MQRG…EQMI) and 83–165 (AKVF…DEQS). 3 stretches are compositionally biased toward basic and acidic residues: residues 23–36 (RSNE…KEST), 91–115 (QIEK…KEDD), and 134–146 (TDKE…SSKD). Acidic residues predominate over residues 147–164 (EDSDDDDYSSDEDSDDEQ). WD repeat units lie at residues 180-219 (HGSR…SSMR), 227-268 (CENH…ECCK), 281-321 (GHVA…EQLQ), 330-369 (GLRT…VNTT), 377-416 (QKGS…QPLH), 422-467 (FSRY…EVQR), and 470-510 (VSNA…RGAK). 2 disordered regions span residues 544 to 580 (KSRT…VASS) and 633 to 655 (AIFS…EADK). Composition is skewed to basic and acidic residues over residues 554-564 (KARMDPVKSQR) and 639-655 (LPAD…EADK).

Belongs to the WD repeat GAD-1 family.

The sequence is that of Gastrulation defective protein 1 homolog from Drosophila melanogaster (Fruit fly).